The primary structure comprises 150 residues: Large ribosomal subunit protein uL13 (150 aa).

Belongs to the universal ribosomal protein uL13 family. Part of the 50S ribosomal subunit.

In terms of biological role, this protein is one of the early assembly proteins of the 50S ribosomal subunit, although it is not seen to bind rRNA by itself. It is important during the early stages of 50S assembly. In Chlamydia muridarum (strain MoPn / Nigg), this protein is Large ribosomal subunit protein uL13.